The following is a 455-amino-acid chain: Ribulose bisphosphate carboxylase large chain (455 aa).

Position 5 is an N6,N6,N6-trimethyllysine (K5). Substrate-binding residues include N114 and T164. The Proton acceptor role is filled by K166. Substrate is bound at residue K168. Mg(2+) contacts are provided by K192, D194, and E195. N6-carboxylysine is present on K192. H285 serves as the catalytic Proton acceptor. Residues R286, H318, and S370 each coordinate substrate.

Belongs to the RuBisCO large chain family. Type I subfamily. Heterohexadecamer of 8 large chains and 8 small chains; disulfide-linked. The disulfide link is formed within the large subunit homodimers. Mg(2+) is required as a cofactor. Post-translationally, the disulfide bond which can form in the large chain dimeric partners within the hexadecamer appears to be associated with oxidative stress and protein turnover.

The protein localises to the plastid. The protein resides in the chloroplast. It catalyses the reaction 2 (2R)-3-phosphoglycerate + 2 H(+) = D-ribulose 1,5-bisphosphate + CO2 + H2O. It carries out the reaction D-ribulose 1,5-bisphosphate + O2 = 2-phosphoglycolate + (2R)-3-phosphoglycerate + 2 H(+). Functionally, ruBisCO catalyzes two reactions: the carboxylation of D-ribulose 1,5-bisphosphate, the primary event in carbon dioxide fixation, as well as the oxidative fragmentation of the pentose substrate in the photorespiration process. Both reactions occur simultaneously and in competition at the same active site. The chain is Ribulose bisphosphate carboxylase large chain from Senna didymobotrya (Popcorn cassia).